We begin with the raw amino-acid sequence, 155 residues long: S-ribosylhomocysteine lyase (155 aa).

3 residues coordinate Fe cation: H57, H61, and C124.

Belongs to the LuxS family. As to quaternary structure, homodimer. Fe cation serves as cofactor.

It carries out the reaction S-(5-deoxy-D-ribos-5-yl)-L-homocysteine = (S)-4,5-dihydroxypentane-2,3-dione + L-homocysteine. In terms of biological role, involved in the synthesis of autoinducer 2 (AI-2) which is secreted by bacteria and is used to communicate both the cell density and the metabolic potential of the environment. The regulation of gene expression in response to changes in cell density is called quorum sensing. Catalyzes the transformation of S-ribosylhomocysteine (RHC) to homocysteine (HC) and 4,5-dihydroxy-2,3-pentadione (DPD). In Listeria monocytogenes serotype 4a (strain HCC23), this protein is S-ribosylhomocysteine lyase.